We begin with the raw amino-acid sequence, 258 residues long: Deoxyribose-phosphate aldolase (258 aa).

The Proton donor/acceptor role is filled by aspartate 101. The active-site Schiff-base intermediate with acetaldehyde is the lysine 166. Lysine 200 acts as the Proton donor/acceptor in catalysis.

The protein belongs to the DeoC/FbaB aldolase family. DeoC type 2 subfamily.

Its subcellular location is the cytoplasm. It catalyses the reaction 2-deoxy-D-ribose 5-phosphate = D-glyceraldehyde 3-phosphate + acetaldehyde. Its pathway is carbohydrate degradation; 2-deoxy-D-ribose 1-phosphate degradation; D-glyceraldehyde 3-phosphate and acetaldehyde from 2-deoxy-alpha-D-ribose 1-phosphate: step 2/2. In terms of biological role, catalyzes a reversible aldol reaction between acetaldehyde and D-glyceraldehyde 3-phosphate to generate 2-deoxy-D-ribose 5-phosphate. This is Deoxyribose-phosphate aldolase from Actinobacillus pleuropneumoniae serotype 3 (strain JL03).